The chain runs to 400 residues: Phosphoglycerate kinase (400 aa).

Substrate is bound by residues 24–26, arginine 39, 62–65, arginine 121, and arginine 154; these read DFN and HFGR. Residues lysine 205, glycine 296, glutamate 327, and 356 to 359 contribute to the ATP site; that span reads GGDS.

This sequence belongs to the phosphoglycerate kinase family. In terms of assembly, monomer.

The protein resides in the cytoplasm. The catalysed reaction is (2R)-3-phosphoglycerate + ATP = (2R)-3-phospho-glyceroyl phosphate + ADP. It participates in carbohydrate degradation; glycolysis; pyruvate from D-glyceraldehyde 3-phosphate: step 2/5. This chain is Phosphoglycerate kinase, found in Rippkaea orientalis (strain PCC 8801 / RF-1) (Cyanothece sp. (strain PCC 8801)).